A 207-amino-acid chain; its full sequence is Large ribosomal subunit protein uL4 (207 aa).

The segment at 58–85 (AGSGKKPFKQKGTGQARQGCRRAPQYPG) is disordered.

Belongs to the universal ribosomal protein uL4 family. In terms of assembly, part of the 50S ribosomal subunit.

Its function is as follows. One of the primary rRNA binding proteins, this protein initially binds near the 5'-end of the 23S rRNA. It is important during the early stages of 50S assembly. It makes multiple contacts with different domains of the 23S rRNA in the assembled 50S subunit and ribosome. Functionally, forms part of the polypeptide exit tunnel. The protein is Large ribosomal subunit protein uL4 of Geotalea uraniireducens (strain Rf4) (Geobacter uraniireducens).